Reading from the N-terminus, the 363-residue chain is MLKSCGRKLLLSLVGSMFTCLLVLMVEPPGRPGLARGEAGGAQRALQSLGAARAAGQGAPGLRSFADYFGRLSRARRELPAAPPSPPRPPAEDITPRDVFIAVKTTKKFHKARLELLLDTWISRNRDMTFIFTDGEDEELKKQARNVINTNCSAAHSRQALSCKMAVEYDKFIESGRKWFCHVDDDNYVNVRTLVKLLSSYPHTQDIYIGKPSLDRPIQATERISENKMHPVHFWFATGGAGFCISRGLALKMSPWASGGHFMSTAEKIRLPDDCTIGYIIESVLGVKLIRSNLFHSHLENLHQVPKTEIHKQVTLSYGMFENKRNSIHMKGAFSVEEDPSRFRSVHCLLYPDTPWCPSNVVY.

The Cytoplasmic segment spans residues 1 to 8 (MLKSCGRK). A helical; Signal-anchor for type II membrane protein membrane pass occupies residues 9 to 29 (LLLSLVGSMFTCLLVLMVEPP). Topologically, residues 30–363 (GRPGLARGEA…TPWCPSNVVY (334 aa)) are lumenal. Arg-113 is a binding site for substrate. N-linked (GlcNAc...) asparagine glycosylation is present at Asn-151. Intrachain disulfides connect Cys-152–Cys-163 and Cys-181–Cys-244. Position 185 (Asp-185) interacts with substrate. Mn(2+) is bound at residue Asp-186. Asp-274 is an active-site residue. Position 298 (His-298) interacts with Mn(2+). Cys-348 and Cys-357 form a disulfide bridge.

It belongs to the glycosyltransferase 31 family. It depends on Mn(2+) as a cofactor. Co(2+) serves as cofactor. A soluble form may be derived from the membrane form by proteolytic processing.

Its subcellular location is the golgi apparatus membrane. The catalysed reaction is 3-O-(alpha-L-fucosyl)-L-threonyl-[EGF-like domain protein] + UDP-N-acetyl-alpha-D-glucosamine = 3-O-(N-acetyl-beta-D-glucosaminyl-(1-&gt;3)-alpha-L-fucosyl)-L-threonyl-[EGF-like domain protein] + UDP + H(+). The enzyme catalyses 3-O-(alpha-L-fucosyl)-L-seryl-[EGF-like domain protein] + UDP-N-acetyl-alpha-D-glucosamine = 3-O-(N-acetyl-beta-D-glucosaminyl-(1-&gt;3)-alpha-L-fucosyl)-L-seryl-[EGF-like domain protein] + UDP + H(+). Its function is as follows. Glycosyltransferase that initiates the elongation of O-linked fucose residues attached to EGF-like repeats in the extracellular domain of Notch molecules. Essential mediator of somite segmentation and patterning. This chain is Beta-1,3-N-acetylglucosaminyltransferase lunatic fringe (LFNG), found in Gallus gallus (Chicken).